We begin with the raw amino-acid sequence, 104 residues long: Glutaredoxin 1 (104 aa).

A Glutaredoxin domain is found at 1 to 96; it reads MNKSILHTII…KLLETQPKNK (96 aa). Cys-17 and Cys-20 form a disulfide bridge.

Belongs to the glutaredoxin family. As to quaternary structure, monomer.

The protein localises to the cytoplasm. In terms of biological role, has a glutathione-disulfide oxidoreductase activity in the presence of NADPH and glutathione reductase. Reduces low molecular weight disulfides and proteins. The sequence is that of Glutaredoxin 1 (grxC1) from Rickettsia typhi (strain ATCC VR-144 / Wilmington).